The following is a 380-amino-acid chain: Endonuclease III homolog 2 (380 aa).

The Nuclear localization signal signature appears at 8-12; it reads RKRKH. Residues 15–40 are interaction with MLH1; the sequence is VDIEEVEVRSKYFKKNERTVELVKEN. Lysine 194 is covalently cross-linked (Glycyl lysine isopeptide (Lys-Gly) (interchain with G-Cter in SUMO)). In terms of domain architecture, HhH spans 228–252; the sequence is FDSDIPYDIEGILSLPGVGPKMGYL. Catalysis depends on lysine 248, which acts as the Nucleophile; for N-glycosylase activity. Cysteine 319, cysteine 326, cysteine 329, and cysteine 335 together coordinate [4Fe-4S] cluster. Positions 376 to 380 match the Nuclear localization signal motif; the sequence is RHKKK.

This sequence belongs to the Nth/MutY family. In terms of assembly, interacts with MLH1. Requires [4Fe-4S] cluster as cofactor. In terms of processing, monosumoylated.

The protein localises to the nucleus. The enzyme catalyses 2'-deoxyribonucleotide-(2'-deoxyribose 5'-phosphate)-2'-deoxyribonucleotide-DNA = a 3'-end 2'-deoxyribonucleotide-(2,3-dehydro-2,3-deoxyribose 5'-phosphate)-DNA + a 5'-end 5'-phospho-2'-deoxyribonucleoside-DNA + H(+). Its function is as follows. Bifunctional DNA N-glycosylase with associated apurinic/apyrimidinic (AP) lyase function that catalyzes the first step in base excision repair (BER), the primary repair pathway for the repair of oxidative DNA damage. The DNA N-glycosylase activity releases the damaged DNA base from DNA by cleaving the N-glycosidic bond, leaving an AP site. The AP-lyase activity cleaves the phosphodiester bond 3' to the AP site by a beta-elimination. Primarily recognizes and repairs oxidative base damage of pyrimidines, but also purine-derived lesions, alkylation damage as well as abasic sites. Can also repair the oxidation products of 8-oxoguanine. The protein is Endonuclease III homolog 2 (NTG2) of Saccharomyces cerevisiae (strain ATCC 204508 / S288c) (Baker's yeast).